A 277-amino-acid polypeptide reads, in one-letter code: Large ribosomal subunit protein uL2 (277 aa).

The disordered stretch occupies residues G222–K277.

It belongs to the universal ribosomal protein uL2 family. Part of the 50S ribosomal subunit. Forms a bridge to the 30S subunit in the 70S ribosome.

In terms of biological role, one of the primary rRNA binding proteins. Required for association of the 30S and 50S subunits to form the 70S ribosome, for tRNA binding and peptide bond formation. It has been suggested to have peptidyltransferase activity; this is somewhat controversial. Makes several contacts with the 16S rRNA in the 70S ribosome. The sequence is that of Large ribosomal subunit protein uL2 from Brucella ovis (strain ATCC 25840 / 63/290 / NCTC 10512).